Consider the following 401-residue polypeptide: Probable cysteine desulfurase (401 aa).

At lysine 223 the chain carries N6-(pyridoxal phosphate)lysine.

The protein belongs to the class-V pyridoxal-phosphate-dependent aminotransferase family. Csd subfamily. Pyridoxal 5'-phosphate is required as a cofactor.

The catalysed reaction is (sulfur carrier)-H + L-cysteine = (sulfur carrier)-SH + L-alanine. Its function is as follows. Catalyzes the removal of elemental sulfur and selenium atoms from L-cysteine, L-cystine, L-selenocysteine, and L-selenocystine to produce L-alanine. This Pseudomonas putida (strain ATCC 47054 / DSM 6125 / CFBP 8728 / NCIMB 11950 / KT2440) protein is Probable cysteine desulfurase (csdA).